Reading from the N-terminus, the 99-residue chain is Large ribosomal subunit protein uL23 (99 aa).

It belongs to the universal ribosomal protein uL23 family. Part of the 50S ribosomal subunit. Contacts protein L29, and trigger factor when it is bound to the ribosome.

Functionally, one of the early assembly proteins it binds 23S rRNA. One of the proteins that surrounds the polypeptide exit tunnel on the outside of the ribosome. Forms the main docking site for trigger factor binding to the ribosome. The polypeptide is Large ribosomal subunit protein uL23 (Shewanella sediminis (strain HAW-EB3)).